The sequence spans 922 residues: GPI inositol-deacylase (922 aa).

The Cytoplasmic portion of the chain corresponds to 1 to 11 (MFLHSVNLWNL). The chain crosses the membrane as a helical span at residues 12 to 32 (AFYVFMVFLATLGLWDVFFGF). Residues 33 to 597 (EENKCSMSYM…GQVVRFHGGA (565 aa)) lie on the Lumenal side of the membrane. Residue serine 174 is part of the active site. 3 N-linked (GlcNAc...) asparagine glycosylation sites follow: asparagine 363, asparagine 402, and asparagine 558. Residues 598-618 (LPAYVVSSILLAYGGQLYSLL) traverse the membrane as a helical segment. Residues 619 to 641 (STGYCLEYSTILDKEAKPYKVDP) lie on the Cytoplasmic side of the membrane. Residues 642–662 (FVIMIKFLLGYKWFKELWDAV) form a helical membrane-spanning segment. Over 663-668 (LLPELD) the chain is Lumenal. The chain crosses the membrane as a helical span at residues 669–689 (AIVLTSQSMCFPLVSLILFLF). The Cytoplasmic segment spans residues 690-694 (GTCTA). A helical transmembrane segment spans residues 695 to 715 (YWSGLLSSTSVQLLSSLWLAL). Residues 716–733 (KRPAELPKDIKVMSPDLP) are Lumenal-facing. The helical transmembrane segment at 734-754 (VLTVVFLIVSWTTCGALAILL) threads the bilayer. At 755–817 (SYLYYVFKVV…DAEDSLRMHS (63 aa)) the chain is on the cytoplasmic side. Residues 776–798 (NQPVNPKHSRRSEKKSNHHKDSA) form a disordered region. Residues 782–793 (KHSRRSEKKSNH) are compositionally biased toward basic residues. Residues 818 to 838 (TVINLLTWVVLLSMPSLIYWL) traverse the membrane as a helical segment. Residues 839 to 894 (KNLRYYFKLSPDPCKPLAFLLIPAIAILGNTHTVSVKSSKLLKTVSQFPLPLAVGV) lie on the Lumenal side of the membrane. The chain crosses the membrane as a helical span at residues 895–915 (IAFGSSHLYRVPCFVIIPLVF). Topologically, residues 916–922 (HALCNFM) are cytoplasmic.

Belongs to the GPI inositol-deacylase family.

The protein resides in the endoplasmic reticulum membrane. In terms of biological role, GPI inositol-deacylase that catalyzes the remove of the acyl chain linked to the 2-OH position of inositol ring from the GPI-anchored protein (GPI-AP) in the endoplasmic reticulum. Initiates the post-attachment remodeling phase of GPI-AP biogenesis and participates in endoplasmic reticulum (ER)-to-Golgi transport of GPI-anchored protein. This Mus musculus (Mouse) protein is GPI inositol-deacylase.